Consider the following 321-residue polypeptide: Ribosomal RNA small subunit methyltransferase H (321 aa).

S-adenosyl-L-methionine is bound by residues 44 to 46, D64, F88, D109, and Q116; that span reads GGH.

Belongs to the methyltransferase superfamily. RsmH family.

The protein resides in the cytoplasm. The enzyme catalyses cytidine(1402) in 16S rRNA + S-adenosyl-L-methionine = N(4)-methylcytidine(1402) in 16S rRNA + S-adenosyl-L-homocysteine + H(+). Specifically methylates the N4 position of cytidine in position 1402 (C1402) of 16S rRNA. The sequence is that of Ribosomal RNA small subunit methyltransferase H from Methylobacillus flagellatus (strain ATCC 51484 / DSM 6875 / VKM B-1610 / KT).